A 447-amino-acid chain; its full sequence is MLLNISSSPISHRNPHFLSNFNNPISYFPRRSKTHLSKSHFFPKFTPLSNQSLKNRVLFGNKRYPDGERFDFRSRAISGIDLGSFESVLEAIAVLTTIIVVHESGHFLAASLQGIHVSKFAIGFGPILAKFDYNNVEYSLRAFPLGGFVGFPDNDPDSEIPIDDENLLKNRPTLDRSIVVSAGIIANVIFAYAIIFVQVLSVGLPVQEAFPGVLVPEVKTFSAASRDGLLSGDVILAVDGTELSKTGPDAVSKIVDIVKRNPKSNVVFRIERGGEDFDIRVTPDKNFDGTGKIGVQLSPNVRITKVRPRNIPETFRFVGREFMGLSSNVLDGLKQTFFNFSQTASKVAGPVAIIAVGAEVARSNIDGLYQFAALLNINLAVINLLPLPALDGGTLALILLEAVRGGKKLPVEVEQGIMSSGIMLVIFLGLFLIVKDTLSLDFIKEML.

The N-terminal 73 residues, 1-73 (MLLNISSSPI…YPDGERFDFR (73 aa)), are a transit peptide targeting the chloroplast. Histidine 102 provides a ligand contact to Zn(2+). Residue glutamate 103 is part of the active site. Histidine 106 is a binding site for Zn(2+). The chain crosses the membrane as a helical span at residues 177 to 197 (SIVVSAGIIANVIFAYAIIFV). One can recognise a PDZ domain in the interval 202–244 (VGLPVQEAFPGVLVPEVKTFSAASRDGLLSGDVILAVDGTELS). The next 2 helical transmembrane spans lie at 379 to 399 (LAVI…ALIL) and 413 to 433 (VEQG…LFLI).

Belongs to the peptidase M50A family. Requires Zn(2+) as cofactor. In terms of tissue distribution, expressed in green seedlings and cotyledons. Low levels of expression in roots, siliques and seeds.

The protein localises to the plastid. Its subcellular location is the chloroplast inner membrane. Functionally, metalloprotease essential for chloroplast and plant development. May be involved in regulated intramembrane proteolysis (RIP). This is Membrane metalloprotease ARASP, chloroplastic from Arabidopsis thaliana (Mouse-ear cress).